Reading from the N-terminus, the 311-residue chain is Immune-associated nucleotide-binding protein 7 (311 aa).

The region spanning 14-222 (KQAENIVLVG…YTDDTYHMIK (209 aa)) is the AIG1-type G domain. Residues 23–30 (GRTGNGKS) form a G1 region. GTP is bound by residues 23–31 (GRTGNGKSA) and Ser-44. The tract at residues 50–54 (GVTMK) is G2. A G3 region spans residues 72-75 (DTPG). Residues 142 to 145 (TGGD) are G4. Residues 181–183 (DNK) form a G5 region. Asn-182 lines the GTP pocket. The stretch at 218-295 (YHMIKEESEK…TQENNELNLA (78 aa)) forms a coiled coil.

The protein belongs to the TRAFAC class TrmE-Era-EngA-EngB-Septin-like GTPase superfamily. AIG1/Toc34/Toc159-like paraseptin GTPase family. IAN subfamily. In terms of tissue distribution, ubiquitous.

This chain is Immune-associated nucleotide-binding protein 7, found in Arabidopsis thaliana (Mouse-ear cress).